A 287-amino-acid chain; its full sequence is Hydroxysteroid 11-beta-dehydrogenase 1-like protein (287 aa).

Residues 1–22 form the signal peptide; it reads MKLYAKLLLCSICVAFIAVRWS. Residues 40–66, 91–92, and 118–120 each bind NADP(+); these read GASTGIGEQLAYHYARLGAQIVITARR, DM, and NHI. A substrate-binding site is contributed by Ser-169. Tyr-182 acts as the Proton acceptor in catalysis. Residues 182 to 186 and 215 to 221 each bind NADP(+); these read YASTK and GLIDTDS.

This sequence belongs to the short-chain dehydrogenases/reductases (SDR) family.

The protein resides in the secreted. It catalyses the reaction cortisone + NADPH + H(+) = cortisol + NADP(+). Its function is as follows. Unidirectional NADP(+)-dependent cortisol dehydrogenase (in vitro). The polypeptide is Hydroxysteroid 11-beta-dehydrogenase 1-like protein (hsd11b1l) (Danio rerio (Zebrafish)).